We begin with the raw amino-acid sequence, 583 residues long: Poly [ADP-ribose] polymerase 2 (583 aa).

The interval 1 to 77 (MAARRRRSTG…GMPGRSWASK (77 aa)) is disordered. The segment at 1 to 103 (MAARRRRSTG…VDPECTAKVG (103 aa)) is N-terminal region (NTR). 2 consecutive short sequence motifs (nuclear localization signal) follow at residues 21-22 (KR) and 35-40 (PAKKTR). An N6-acetyllysine mark is found at lysine 37 and lysine 38. A compositionally biased stretch (basic and acidic residues) spans 57-67 (ANKDRTEDKQD). A WGR domain is found at 104–201 (KAHVYCEGND…EKFEKVPGKY (98 aa)). Phosphoserine occurs at positions 226 and 232. Residues 231–348 (ESQLDLRVQE…DIEIAIKLVK (118 aa)) form the PARP alpha-helical domain. In terms of domain architecture, PARP catalytic spans 356 to 583 (HPLDQHYRNL…KVQFNFLQLW (228 aa)). Residues 428-430 (HGS), glycine 437, arginine 444, and serine 470 contribute to the NAD(+) site. The active-site For poly [ADP-ribose] polymerase activity is the glutamate 558.

The protein belongs to the ARTD/PARP family. Component of a base excision repair (BER) complex, containing at least XRCC1, PARP1, POLB and LRIG3. Homo- and heterodimer with PARP1. Interacts (via the PARP catalytic domain) with HPF1. Interacts with core nucleosomes. In terms of processing, auto poly-ADP-ribosylated on serine residues, leading to dissociation of the PARP2-HPF1 complex from chromatin. Poly-ADP-ribosylated by PARP1. Post-translationally, acetylation reduces DNA binding and enzymatic activity. Proteolytically cleaved by caspase-8 (CASP8) in response to apoptosis, leading to its inactivation. In terms of tissue distribution, widely expressed, mainly in actively dividing tissues. The highest levels are in the brain, heart, pancreas, skeletal muscle and testis; also detected in kidney, liver, lung, placenta, ovary and spleen; levels are low in leukocytes, colon, small intestine, prostate and thymus.

Its subcellular location is the nucleus. It is found in the chromosome. It carries out the reaction NAD(+) + (ADP-D-ribosyl)n-acceptor = nicotinamide + (ADP-D-ribosyl)n+1-acceptor + H(+).. It catalyses the reaction L-seryl-[protein] + NAD(+) = O-(ADP-D-ribosyl)-L-seryl-[protein] + nicotinamide + H(+). The catalysed reaction is L-aspartyl-[protein] + NAD(+) = 4-O-(ADP-D-ribosyl)-L-aspartyl-[protein] + nicotinamide. The enzyme catalyses L-glutamyl-[protein] + NAD(+) = 5-O-(ADP-D-ribosyl)-L-glutamyl-[protein] + nicotinamide. ADP-ribosyltransferase activity is regulated via an allosteric activation mechanism. In absence of activation signal, PARP2 is autoinhibited by the PARP alpha-helical domain (also named HD region), which prevents effective NAD(+)-binding. Activity is highly stimulated by signals, which unfold the PARP alpha-helical domain, relieving autoinhibition. Poly-ADP-ribosyltransferase activity is tightly regulated and PARP2 is removed from damaged chromatin following initial poly-ADP-ribosylation of chromatin to avoid prolonged residence (trapping) that has cytotoxic consequences. CHD1L promotes PARP2 removal from chromatin. ADP-ribosyltransferase activity is inhibited by a number of PARP inhibitors (PARPi) compounds, that are used the treatment of breast or ovarian cancers that have defects in DNA repair by homologous recombination. PARPi molecules (niraparib, talazoparib, and, to a lesser extent, olaparib) also trap PARP2 at DNA damage sites. In terms of biological role, poly-ADP-ribosyltransferase that mediates poly-ADP-ribosylation of proteins and plays a key role in DNA repair. Mediates glutamate, aspartate or serine ADP-ribosylation of proteins: the ADP-D-ribosyl group of NAD(+) is transferred to the acceptor carboxyl group of target residues and further ADP-ribosyl groups are transferred to the 2'-position of the terminal adenosine moiety, building up a polymer with an average chain length of 20-30 units. Serine ADP-ribosylation of proteins constitutes the primary form of ADP-ribosylation of proteins in response to DNA damage. Mediates glutamate and aspartate ADP-ribosylation of target proteins in absence of HPF1. Following interaction with HPF1, catalyzes serine ADP-ribosylation of target proteins; HPF1 conferring serine specificity by completing the PARP2 active site. PARP2 initiates the repair of double-strand DNA breaks: recognizes and binds DNA breaks within chromatin and recruits HPF1, licensing serine ADP-ribosylation of target proteins, such as histones, thereby promoting decompaction of chromatin and the recruitment of repair factors leading to the reparation of DNA strand breaks. HPF1 initiates serine ADP-ribosylation but restricts the polymerase activity of PARP2 in order to limit the length of poly-ADP-ribose chains. Specifically mediates formation of branched poly-ADP-ribosylation. Branched poly-ADP-ribose chains are specifically recognized by some factors, such as APLF. In addition to proteins, also able to ADP-ribosylate DNA: preferentially acts on 5'-terminal phosphates at DNA strand breaks termini in nicked duplex. This Homo sapiens (Human) protein is Poly [ADP-ribose] polymerase 2.